A 283-amino-acid polypeptide reads, in one-letter code: MPSSTTTAPPGTHPNATASTVFAILGTVCWCVQLIPQIIKNYRAKSTEGLDTLFILSWVVASIPLSVYNQVQELNIALKVQPELFQALAFTTFFQCLYYGSKWPLRKALFVVISFMLFSGGLQAMLILTIKLGIRRHVEWPVVFMGVLATVLVNIGFLPQYISIFRARAVTGISYLFLAIDSSGSLFSFLSLPFDRWDVLAAVDYGLLFIIEMGVFVLAFIFNVLLKNKSTPTDEDVTFTEEDGDEKDEEYSDIFSIKGKFNTRPNAWQNAYDSDTKSAIQIP.

An N-linked (GlcNAc...) asparagine glycan is attached at Asn15. One can recognise a PQ-loop 1 domain in the interval 15-81 (NATASTVFAI…QELNIALKVQ (67 aa)). Helical transmembrane passes span 19–39 (STVF…PQII), 48–68 (EGLD…LSVY), 108–128 (ALFV…MLIL), 138–158 (VEWP…IGFL), 170–190 (VTGI…FSFL), and 206–226 (GLLF…NVLL). Residues 149–204 (ATVLVNIGFLPQYISIFRARAVTGISYLFLAIDSSGSLFSFLSLPFDRWDVLAAVD) enclose the PQ-loop 2 domain. N-linked (GlcNAc...) asparagine glycosylation occurs at Asn228.

Its subcellular location is the membrane. This is an uncharacterized protein from Schizosaccharomyces pombe (strain 972 / ATCC 24843) (Fission yeast).